A 709-amino-acid chain; its full sequence is Polyribonucleotide nucleotidyltransferase (709 aa).

Mg(2+) contacts are provided by aspartate 489 and aspartate 495. Positions 556–615 (PKIDMIKIDVDKIKVVIGKGGETIDKIIAETGVKIDIDEEGNVSIFSSDQAAIDRTKDII) constitute a KH domain. Positions 625–693 (GEVYHAKVVR…DKGRVDASMK (69 aa)) constitute an S1 motif domain.

The protein belongs to the polyribonucleotide nucleotidyltransferase family. It depends on Mg(2+) as a cofactor.

Its subcellular location is the cytoplasm. The catalysed reaction is RNA(n+1) + phosphate = RNA(n) + a ribonucleoside 5'-diphosphate. Involved in mRNA degradation. Catalyzes the phosphorolysis of single-stranded polyribonucleotides processively in the 3'- to 5'-direction. This is Polyribonucleotide nucleotidyltransferase from Streptococcus agalactiae serotype Ia (strain ATCC 27591 / A909 / CDC SS700).